We begin with the raw amino-acid sequence, 133 residues long: Crossover junction endodeoxyribonuclease Hjc (133 aa).

Glutamate 12 lines the Mg(2+) pocket. Residue serine 32 is part of the active site. Mg(2+)-binding residues include aspartate 36 and glutamate 49.

The protein belongs to the Holliday junction resolvase Hjc family. As to quaternary structure, homodimer. It depends on Mg(2+) as a cofactor.

The catalysed reaction is Endonucleolytic cleavage at a junction such as a reciprocal single-stranded crossover between two homologous DNA duplexes (Holliday junction).. In terms of biological role, a structure-specific endonuclease that resolves Holliday junction (HJ) intermediates during genetic recombination. Cleaves 4-way DNA junctions introducing paired nicks in opposing strands, leaving a 5'-terminal phosphate and a 3'-terminal hydroxyl group that are subsequently ligated to produce recombinant products. In Methanocaldococcus jannaschii (strain ATCC 43067 / DSM 2661 / JAL-1 / JCM 10045 / NBRC 100440) (Methanococcus jannaschii), this protein is Crossover junction endodeoxyribonuclease Hjc.